The following is a 374-amino-acid chain: Queuine tRNA-ribosyltransferase (374 aa).

Asp89 (proton acceptor) is an active-site residue. Substrate-binding positions include 89–93 (DSGGF), Asp143, Gln187, and Gly214. An RNA binding region spans residues 245–251 (GVGKPED). The Nucleophile role is filled by Asp264. Positions 269 to 273 (TRNAR) are RNA binding; important for wobble base 34 recognition. Residues Cys302, Cys304, Cys307, and His333 each contribute to the Zn(2+) site.

The protein belongs to the queuine tRNA-ribosyltransferase family. In terms of assembly, homodimer. Within each dimer, one monomer is responsible for RNA recognition and catalysis, while the other monomer binds to the replacement base PreQ1. The cofactor is Zn(2+).

It catalyses the reaction 7-aminomethyl-7-carbaguanine + guanosine(34) in tRNA = 7-aminomethyl-7-carbaguanosine(34) in tRNA + guanine. Its pathway is tRNA modification; tRNA-queuosine biosynthesis. Its function is as follows. Catalyzes the base-exchange of a guanine (G) residue with the queuine precursor 7-aminomethyl-7-deazaguanine (PreQ1) at position 34 (anticodon wobble position) in tRNAs with GU(N) anticodons (tRNA-Asp, -Asn, -His and -Tyr). Catalysis occurs through a double-displacement mechanism. The nucleophile active site attacks the C1' of nucleotide 34 to detach the guanine base from the RNA, forming a covalent enzyme-RNA intermediate. The proton acceptor active site deprotonates the incoming PreQ1, allowing a nucleophilic attack on the C1' of the ribose to form the product. After dissociation, two additional enzymatic reactions on the tRNA convert PreQ1 to queuine (Q), resulting in the hypermodified nucleoside queuosine (7-(((4,5-cis-dihydroxy-2-cyclopenten-1-yl)amino)methyl)-7-deazaguanosine). This chain is Queuine tRNA-ribosyltransferase, found in Photorhabdus laumondii subsp. laumondii (strain DSM 15139 / CIP 105565 / TT01) (Photorhabdus luminescens subsp. laumondii).